The primary structure comprises 262 residues: MTGINAMAPAPEVVSWAEAVEQDNAPHIQEGADGTRTETAFTEVDGVRWKVVTQFKVINKRVPKVVADRKKWVKFGSCKGEPAGPQVATTYVAEEVDMQFTRNRAGEQILDVQEDKQTAKTTSREHCRHCKGNDHWSTHCPYKVMYQLDEEADADKDTEKDRMAMGMRPDGRQIDRNRSDENTCRVTNLPQEMNEDELRDLFGKIGRVIRIFIARDKVTGLPKGFAFVTFESRDDAARAIAELNDIRMYHMVLKVEWTRPSN.

An RRM domain is found at 182 to 260 (NTCRVTNLPQ…MVLKVEWTRP (79 aa)).

This sequence belongs to the eIF-3 subunit G family. As to quaternary structure, component of the eukaryotic translation initiation factor 3 (eIF-3) complex.

The protein localises to the cytoplasm. Its function is as follows. RNA-binding component of the eukaryotic translation initiation factor 3 (eIF-3) complex, which is involved in protein synthesis of a specialized repertoire of mRNAs and, together with other initiation factors, stimulates binding of mRNA and methionyl-tRNAi to the 40S ribosome. The eIF-3 complex specifically targets and initiates translation of a subset of mRNAs involved in cell proliferation. This subunit can bind 18S rRNA. Binds to GC-rich 5'UTRs in cholinergic motor neurons, thereby may play a role in translational regulation of mRNAs involved in neuropeptide signaling and stress response, including hlh-30 isoform d and ncs-2. The sequence is that of Eukaryotic translation initiation factor 3 subunit G from Caenorhabditis elegans.